Reading from the N-terminus, the 140-residue chain is Putative pre-16S rRNA nuclease (140 aa).

This sequence belongs to the YqgF nuclease family.

Its subcellular location is the cytoplasm. Functionally, could be a nuclease involved in processing of the 5'-end of pre-16S rRNA. The polypeptide is Putative pre-16S rRNA nuclease (Vibrio vulnificus (strain YJ016)).